Reading from the N-terminus, the 113-residue chain is Endoribonuclease SymE (113 aa).

A SpoVT-AbrB domain is found at 29–74; the sequence is GRYPDYSRIPAITLKGQWLEVAGFATGTAVDVKVMEGCIVLTAQPP.

This sequence belongs to the SymE family.

Its subcellular location is the cytoplasm. Involved in the degradation and recycling of damaged RNA. It is itself a target for degradation by the ATP-dependent protease Lon. The protein is Endoribonuclease SymE of Escherichia coli O7:K1 (strain IAI39 / ExPEC).